The following is a 198-amino-acid chain: Pyridoxal 5'-phosphate synthase subunit PdxT (198 aa).

52-54 (GES) is an L-glutamine binding site. Cys84 functions as the Nucleophile in the catalytic mechanism. L-glutamine is bound by residues Arg115 and 143–144 (IR). Residues His179 and Glu181 each act as charge relay system in the active site.

This sequence belongs to the glutaminase PdxT/SNO family. In the presence of PdxS, forms a dodecamer of heterodimers. Only shows activity in the heterodimer.

The enzyme catalyses aldehydo-D-ribose 5-phosphate + D-glyceraldehyde 3-phosphate + L-glutamine = pyridoxal 5'-phosphate + L-glutamate + phosphate + 3 H2O + H(+). It carries out the reaction L-glutamine + H2O = L-glutamate + NH4(+). It participates in cofactor biosynthesis; pyridoxal 5'-phosphate biosynthesis. Catalyzes the hydrolysis of glutamine to glutamate and ammonia as part of the biosynthesis of pyridoxal 5'-phosphate. The resulting ammonia molecule is channeled to the active site of PdxS. The sequence is that of Pyridoxal 5'-phosphate synthase subunit PdxT from Methanococcoides burtonii (strain DSM 6242 / NBRC 107633 / OCM 468 / ACE-M).